A 213-amino-acid polypeptide reads, in one-letter code: MEQYKYDFIEFALSRNVLKFGEFTLKSGRISPYFFNAGLFNTGRDLAKLGEYYATAIQASQIEYDVLFGPAYKGIPIATTVAVALANQFAIDKPCCFNRKEAKTHGEGGQLIGAVLEGKILLVDDVITAGTAIRESMQLIKLNQASLAGVMIALNRQEKGNGELSAIQEVERDYACQVHSIINFDDLVYFIEQSAKHAPYLTKMREYRAKYGV.

K26 lines the 5-phospho-alpha-D-ribose 1-diphosphate pocket. Residue F34–F35 coordinates orotate. 5-phospho-alpha-D-ribose 1-diphosphate contacts are provided by residues Y72–K73, R99, K100, K103, H105, and D124–A132. Residues T128 and R156 each coordinate orotate.

Belongs to the purine/pyrimidine phosphoribosyltransferase family. PyrE subfamily. In terms of assembly, homodimer. The cofactor is Mg(2+).

The enzyme catalyses orotidine 5'-phosphate + diphosphate = orotate + 5-phospho-alpha-D-ribose 1-diphosphate. The protein operates within pyrimidine metabolism; UMP biosynthesis via de novo pathway; UMP from orotate: step 1/2. Its function is as follows. Catalyzes the transfer of a ribosyl phosphate group from 5-phosphoribose 1-diphosphate to orotate, leading to the formation of orotidine monophosphate (OMP). This Haemophilus ducreyi (strain 35000HP / ATCC 700724) protein is Orotate phosphoribosyltransferase.